Consider the following 173-residue polypeptide: Photosystem I assembly protein Ycf3 (173 aa).

TPR repeat units follow at residues 35 to 68, 72 to 105, and 120 to 153; these read AFSYYRDGMSAQAEGEYAEALQNYYEAMRLEIDP, SYILYNIGLIHTSNGEHGKALEYYYQAIERNPSL, and GEQAIEEGNIATSEILFNQAASYWKQAIRLAPNS.

This sequence belongs to the Ycf3 family.

The protein resides in the plastid. The protein localises to the chloroplast thylakoid membrane. In terms of biological role, essential for the assembly of the photosystem I (PSI) complex. May act as a chaperone-like factor to guide the assembly of the PSI subunits. This chain is Photosystem I assembly protein Ycf3, found in Mesostigma viride (Green alga).